Here is a 270-residue protein sequence, read N- to C-terminus: Imidazole glycerol phosphate synthase subunit HisF (270 aa).

Residues aspartate 11 and aspartate 135 contribute to the active site.

It belongs to the HisA/HisF family. As to quaternary structure, heterodimer of HisH and HisF.

It is found in the cytoplasm. It carries out the reaction 5-[(5-phospho-1-deoxy-D-ribulos-1-ylimino)methylamino]-1-(5-phospho-beta-D-ribosyl)imidazole-4-carboxamide + L-glutamine = D-erythro-1-(imidazol-4-yl)glycerol 3-phosphate + 5-amino-1-(5-phospho-beta-D-ribosyl)imidazole-4-carboxamide + L-glutamate + H(+). It participates in amino-acid biosynthesis; L-histidine biosynthesis; L-histidine from 5-phospho-alpha-D-ribose 1-diphosphate: step 5/9. Its function is as follows. IGPS catalyzes the conversion of PRFAR and glutamine to IGP, AICAR and glutamate. The HisF subunit catalyzes the cyclization activity that produces IGP and AICAR from PRFAR using the ammonia provided by the HisH subunit. In Haloquadratum walsbyi (strain DSM 16790 / HBSQ001), this protein is Imidazole glycerol phosphate synthase subunit HisF.